The sequence spans 87 residues: Defensin-like protein 176 (87 aa).

Positions 1–23 (MAKATSSLVVPIIFLVIFALVEQ) are cleaved as a signal peptide. 4 disulfide bridges follow: cysteine 27/cysteine 66, cysteine 36/cysteine 55, cysteine 39/cysteine 60, and cysteine 43/cysteine 62.

The protein belongs to the DEFL family.

It localises to the secreted. The sequence is that of Defensin-like protein 176 (LCR65) from Arabidopsis thaliana (Mouse-ear cress).